The chain runs to 470 residues: ATP-dependent protease ATPase subunit HslU (470 aa).

Residues Val22 and 64 to 69 each bind ATP; that span reads GVGKTE. The disordered stretch occupies residues 145 to 187; it reads KKANNNTNSNNPLESLFGGSIPNFGQNNDDEEETPTDEVKTKR. ATP contacts are provided by Asp283, Glu348, and Arg420.

It belongs to the ClpX chaperone family. HslU subfamily. A double ring-shaped homohexamer of HslV is capped on each side by a ring-shaped HslU homohexamer. The assembly of the HslU/HslV complex is dependent on binding of ATP.

The protein resides in the cytoplasm. In terms of biological role, ATPase subunit of a proteasome-like degradation complex; this subunit has chaperone activity. The binding of ATP and its subsequent hydrolysis by HslU are essential for unfolding of protein substrates subsequently hydrolyzed by HslV. HslU recognizes the N-terminal part of its protein substrates and unfolds these before they are guided to HslV for hydrolysis. The polypeptide is ATP-dependent protease ATPase subunit HslU (Staphylococcus saprophyticus subsp. saprophyticus (strain ATCC 15305 / DSM 20229 / NCIMB 8711 / NCTC 7292 / S-41)).